Reading from the N-terminus, the 345-residue chain is sn-glycerol-3-phosphate import ATP-binding protein UgpC (345 aa).

In terms of domain architecture, ABC transporter spans 4 to 235 (IQLLNIKKQY…PKTIFVADFI (232 aa)). ATP is bound at residue 37–44 (GPSGCGKS).

It belongs to the ABC transporter superfamily. sn-glycerol-3-phosphate importer (TC 3.A.1.1.3) family. As to quaternary structure, the complex is composed of two ATP-binding proteins (UgpC), two transmembrane proteins (UgpA and UgpE) and a solute-binding protein (UgpB).

Its subcellular location is the cell inner membrane. It carries out the reaction sn-glycerol 3-phosphate(out) + ATP + H2O = sn-glycerol 3-phosphate(in) + ADP + phosphate + H(+). In terms of biological role, part of the ABC transporter complex UgpBAEC involved in sn-glycerol-3-phosphate (G3P) import. Responsible for energy coupling to the transport system. The chain is sn-glycerol-3-phosphate import ATP-binding protein UgpC from Bartonella bacilliformis (strain ATCC 35685 / KC583 / Herrer 020/F12,63).